Consider the following 262-residue polypeptide: Tryptophan synthase alpha chain (262 aa).

Catalysis depends on proton acceptor residues E52 and D63.

The protein belongs to the TrpA family. In terms of assembly, tetramer of two alpha and two beta chains.

The catalysed reaction is (1S,2R)-1-C-(indol-3-yl)glycerol 3-phosphate + L-serine = D-glyceraldehyde 3-phosphate + L-tryptophan + H2O. Its pathway is amino-acid biosynthesis; L-tryptophan biosynthesis; L-tryptophan from chorismate: step 5/5. Functionally, the alpha subunit is responsible for the aldol cleavage of indoleglycerol phosphate to indole and glyceraldehyde 3-phosphate. The chain is Tryptophan synthase alpha chain from Mycobacteroides abscessus (strain ATCC 19977 / DSM 44196 / CCUG 20993 / CIP 104536 / JCM 13569 / NCTC 13031 / TMC 1543 / L948) (Mycobacterium abscessus).